The following is a 192-amino-acid chain: Xanthine phosphoribosyltransferase (192 aa).

The xanthine site is built by leucine 20 and asparagine 27. 128–132 (ANGQA) contributes to the 5-phospho-alpha-D-ribose 1-diphosphate binding site. Residue lysine 156 coordinates xanthine.

Belongs to the purine/pyrimidine phosphoribosyltransferase family. Xpt subfamily. In terms of assembly, homodimer.

It localises to the cytoplasm. It catalyses the reaction XMP + diphosphate = xanthine + 5-phospho-alpha-D-ribose 1-diphosphate. It functions in the pathway purine metabolism; XMP biosynthesis via salvage pathway; XMP from xanthine: step 1/1. Functionally, converts the preformed base xanthine, a product of nucleic acid breakdown, to xanthosine 5'-monophosphate (XMP), so it can be reused for RNA or DNA synthesis. This Listeria monocytogenes serotype 4b (strain F2365) protein is Xanthine phosphoribosyltransferase.